The following is a 148-amino-acid chain: uncharacterized protein (148 aa).

The disordered stretch occupies residues 1–108 (MGRAGPRSTA…PSRLRGKRSL (108 aa)). Basic residues predominate over residues 22–42 (RRPRPWQKPTSPRRLHRRRPR). The segment covering 88–97 (DTSASNPSQR) has biased composition (polar residues).

This is an uncharacterized protein from Homo sapiens (Human).